A 76-amino-acid chain; its full sequence is Amyloid protein A (76 aa).

Belongs to the SAA family. Expressed by the liver; secreted in plasma.

It localises to the secreted. In terms of biological role, major acute phase reactant. Apolipoprotein of the HDL complex. This is Amyloid protein A (SAA1) from Macaca mulatta (Rhesus macaque).